A 100-amino-acid polypeptide reads, in one-letter code: Small ribosomal subunit protein uS14c (100 aa).

The protein belongs to the universal ribosomal protein uS14 family. As to quaternary structure, part of the 30S ribosomal subunit.

It localises to the plastid. The protein localises to the chloroplast. Functionally, binds 16S rRNA, required for the assembly of 30S particles. This Cryptomeria japonica (Japanese cedar) protein is Small ribosomal subunit protein uS14c.